A 55-amino-acid polypeptide reads, in one-letter code: uncharacterized protein (55 aa).

This is an uncharacterized protein from Tibrogargan virus (strain CS132) (TIBV).